Here is a 493-residue protein sequence, read N- to C-terminus: Neuronal acetylcholine receptor subunit alpha-6 (493 aa).

The first 30 residues, 1–30 (MLNGWGRGDLRSGLCLWICGFLAFFKGSRG), serve as a signal peptide directing secretion. Topologically, residues 31–240 (CVSEEQLFHT…TYSFYIRRLP (210 aa)) are extracellular. N-linked (GlcNAc...) asparagine glycans are attached at residues Asn54 and Asn171. Cystine bridges form between Cys158–Cys172 and Cys222–Cys223. 3 helical membrane passes run 241 to 265 (MFYT…FYLP), 272 to 290 (VTLC…LVIT), and 306 to 327 (YLLF…VLNI). Residues 328–464 (HYRTPATHTM…WKYMAMVVDR (137 aa)) lie on the Cytoplasmic side of the membrane. Ser401 carries the post-translational modification Phosphoserine. A helical membrane pass occupies residues 465–484 (VFLWVFIIVCVFGTVGLFLQ).

The protein belongs to the ligand-gated ion channel (TC 1.A.9) family. Acetylcholine receptor (TC 1.A.9.1) subfamily. Alpha-6/CHRNA6 sub-subfamily. Neuronal AChR is composed of two different types of subunits: alpha and non-alpha (beta). CHRNA6/alpha-6 subunit can be combined to CHRNB2/beta-2 and CHRNA4/alpha-4 to give rise to functional receptors. Interacts with LYPD6. As to expression, predominantly expressed in only a few brain areas, including dopaminergic neurons, norepirephrine neurons and cells of the visual system.

The protein localises to the synaptic cell membrane. It catalyses the reaction Ca(2+)(in) = Ca(2+)(out). The enzyme catalyses K(+)(in) = K(+)(out). The catalysed reaction is Na(+)(in) = Na(+)(out). Activated by a myriad of ligands such as acetylcholine, cytisine and nicotine. CHRNA6 nAChR activity is inhibited by the antagonists alpha-conotoxin MII and PIA, a small disulfide-constrained peptides from cone snails. Functionally, component of neuronal acetylcholine receptors (nAChRs) that function as pentameric, ligand-gated cation channels with high calcium permeability among other activities. nAChRs are excitatory neurotrasnmitter receptors formed by a collection of nAChR subunits known to mediate synaptic transmission in the nervous system and the neuromuscular junction. Each nAchR subunit confers differential attributes to channel properties, including activation, deactivation and desensitization kinetics, pH sensitivity, cation permeability, and binding to allosteric modulators. CHRNA6 forms pentameric channels with CHRNB2 and CHRNA4 that exhibit high sensitivity to ACh and nicotine and are predominantly expressed in only a few brain areas, including dopaminergic neurons, norepirephrine neurons and cells of the visual system. nAChrs containing CHRNA6 subunits mediate endogenous cholinergic modulation of dopamine and gamma-aminobutyric acid (GABA) release in response to nicotine at nerve terminals. The chain is Neuronal acetylcholine receptor subunit alpha-6 (Chrna6) from Rattus norvegicus (Rat).